A 338-amino-acid polypeptide reads, in one-letter code: Anthranilate phosphoribosyltransferase (338 aa).

5-phospho-alpha-D-ribose 1-diphosphate-binding positions include Gly-80, 83–84, Thr-88, 90–93, 108–116, and Ser-120; these read GD, NIST, and KHGNRAVSS. Anthranilate is bound at residue Gly-80. A Mg(2+)-binding site is contributed by Ser-92. An anthranilate-binding site is contributed by Asn-111. An anthranilate-binding site is contributed by Arg-166. Residues Asp-225 and Glu-226 each coordinate Mg(2+).

This sequence belongs to the anthranilate phosphoribosyltransferase family. As to quaternary structure, homodimer. Mg(2+) is required as a cofactor.

It carries out the reaction N-(5-phospho-beta-D-ribosyl)anthranilate + diphosphate = 5-phospho-alpha-D-ribose 1-diphosphate + anthranilate. It participates in amino-acid biosynthesis; L-tryptophan biosynthesis; L-tryptophan from chorismate: step 2/5. Functionally, catalyzes the transfer of the phosphoribosyl group of 5-phosphorylribose-1-pyrophosphate (PRPP) to anthranilate to yield N-(5'-phosphoribosyl)-anthranilate (PRA). This chain is Anthranilate phosphoribosyltransferase, found in Thermoanaerobacter sp. (strain X514).